The sequence spans 541 residues: Halolysin-like extracellular serine protease Nep (541 aa).

Positions 1–33 (MTRDTNSNVGRRSVLKAASALGAFLGLGGVASA) form a signal peptide, tat-type signal. The propeptide occupies 34 to 121 (TPGREPGPKK…DNATYETLEV (88 aa)). Residues 130–405 (QYAPQQVNCE…YGRVDAELAV (276 aa)) enclose the Peptidase S8 domain. Active-site charge relay system residues include Asp157, His198, and Ser351. Residues 403–453 (LAVTTDPDNGDDDDDDDDDEDDPGDGECGDETNTATADGELSGGWGGNPSD) form a disordered region. A compositionally biased stretch (acidic residues) spans 410 to 432 (DNGDDDDDDDDDEDDPGDGECGD).

Belongs to the peptidase S8 family. As to quaternary structure, monomer. In terms of processing, exported by the Tat system. The position of the signal peptide cleavage has not been experimentally proven. After transport across the membrane, the propeptide is probably processed autocatalytically, yielding the mature fully active protease.

Its subcellular location is the secreted. Dependent on high salt concentrations for activity and stability. Strongly inhibited by the serine protease inhibitors diisopropyl fluorophosphate (DFP), phenylmethyl sulfonylfluoride (PMSF) and chymostatin. Also inhibited by denaturing agents such as SDS, urea, and HCl guanidinium. Activated by thiol-containing reducing agents such as dithiotreitol (DTT) and 2-mercaptoethanol. Serine protease that hydrolyzes large proteins such as casein and gelatin. Cleaves preferentially at the carboxyl terminus of Phe, Tyr or Leu. Is also able to catalyze peptide synthesis under different salt concentrations in the presence of dimethyl sulfoxide (DMSO). This is Halolysin-like extracellular serine protease Nep from Natrialba magadii.